A 131-amino-acid chain; its full sequence is MSGWDDYIKLLFGKSPAIKRAAIIGSDGSVWARSGDANAFRATEVELKRFAALFNDINSVPGTGADLEEIHYIVPRVEEKLIFGKKEQTGFFAAKTNQAIVIAMYEGDNAQSASVRAGVEYIAQYLASSGY.

Belongs to the profilin family. Occurs in many kinds of cells as a complex with monomeric actin in a 1:1 ratio. As to expression, expressed in the intestinal wall, the spermatheca, and the pharynx.

The protein localises to the cytoplasm. The protein resides in the cytoskeleton. Functionally, binds to actin and affects the structure of the cytoskeleton. At high concentrations, profilin prevents the polymerization of actin, whereas it enhances it at low concentrations. By binding to PIP2, it inhibits the formation of IP3 and DG. This is Profilin-2 (pfn-2) from Caenorhabditis elegans.